The primary structure comprises 156 residues: rRNA methyltransferase (156 aa).

Functionally, modifies 16S rRNA so making ribosomes resistant to certain aminoglycosides. In Saccharopolyspora hirsuta, this protein is rRNA methyltransferase (kamC).